We begin with the raw amino-acid sequence, 199 residues long: Acireductone dioxygenase 1 (199 aa).

Fe(2+)-binding residues include His99, His101, Glu105, and His144. 4 residues coordinate Ni(2+): His99, His101, Glu105, and His144.

Belongs to the acireductone dioxygenase (ARD) family. Requires Fe(2+) as cofactor. It depends on Ni(2+) as a cofactor.

It is found in the cytoplasm. The protein resides in the nucleus. The enzyme catalyses 1,2-dihydroxy-5-(methylsulfanyl)pent-1-en-3-one + O2 = 4-methylsulfanyl-2-oxobutanoate + formate + 2 H(+). The catalysed reaction is 1,2-dihydroxy-5-(methylsulfanyl)pent-1-en-3-one + O2 = 3-(methylsulfanyl)propanoate + CO + formate + 2 H(+). Its pathway is amino-acid biosynthesis; L-methionine biosynthesis via salvage pathway; L-methionine from S-methyl-5-thio-alpha-D-ribose 1-phosphate: step 5/6. Functionally, catalyzes 2 different reactions between oxygen and the acireductone 1,2-dihydroxy-3-keto-5-methylthiopentene (DHK-MTPene) depending upon the metal bound in the active site. Fe-containing acireductone dioxygenase (Fe-ARD) produces formate and 2-keto-4-methylthiobutyrate (KMTB), the alpha-ketoacid precursor of methionine in the methionine recycle pathway. Ni-containing acireductone dioxygenase (Ni-ARD) produces methylthiopropionate, carbon monoxide and formate, and does not lie on the methionine recycle pathway. The polypeptide is Acireductone dioxygenase 1 (ARD1) (Oryza sativa subsp. indica (Rice)).